The sequence spans 501 residues: Lysine--tRNA ligase (501 aa).

The Mg(2+) site is built by glutamate 402 and glutamate 409.

Belongs to the class-II aminoacyl-tRNA synthetase family. In terms of assembly, homodimer. Mg(2+) serves as cofactor.

Its subcellular location is the cytoplasm. The catalysed reaction is tRNA(Lys) + L-lysine + ATP = L-lysyl-tRNA(Lys) + AMP + diphosphate. This chain is Lysine--tRNA ligase, found in Helicobacter pylori (strain G27).